The following is a 654-amino-acid chain: Pentatricopeptide repeat-containing protein At3g16610 (654 aa).

PPR repeat units follow at residues methionine 1–leucine 32, serine 34–proline 64, asparagine 67–proline 101, threonine 102–threonine 136, aspartate 137–alanine 171, tryptophan 172–proline 203, asparagine 204–asparagine 238, aspartate 239–lysine 269, asparagine 270–alanine 304, threonine 307–leucine 341, aspartate 342–lysine 372, aspartate 373–proline 407, aspartate 408–valine 442, asparagine 443–arginine 473, aspartate 474–proline 508, aspartate 509–valine 543, and arginine 546–glutamate 576. The tract at residues valine 581 to valine 654 is type E motif; degenerate.

It belongs to the PPR family. PCMP-E subfamily.

The chain is Pentatricopeptide repeat-containing protein At3g16610 (PCMP-E91) from Arabidopsis thaliana (Mouse-ear cress).